Here is a 561-residue protein sequence, read N- to C-terminus: Arginine--tRNA ligase (561 aa).

The 'HIGH' region signature appears at Pro-108–His-118.

The protein belongs to the class-I aminoacyl-tRNA synthetase family. As to quaternary structure, monomer.

The protein localises to the cytoplasm. The enzyme catalyses tRNA(Arg) + L-arginine + ATP = L-arginyl-tRNA(Arg) + AMP + diphosphate. This Haemophilus ducreyi (strain 35000HP / ATCC 700724) protein is Arginine--tRNA ligase.